Consider the following 110-residue polypeptide: uncharacterized protein (110 aa).

A run of 3 helical transmembrane segments spans residues 4-26 (LVGG…KSIN), 46-68 (ANRY…GLLL), and 72-91 (LFIL…FMLT).

Its subcellular location is the cell membrane. This is an uncharacterized protein from Bacillus subtilis (strain 168).